The primary structure comprises 304 residues: MTTLRIATRKSPLALWQSEHVAAALRQHHPGLEVVLVPMSTRGDEVLDRSLAAIGGKGLFLKELELAMLRGDADCAVHSFKDVPMELDDPFVLPAILERGDPADALVSNLYASLQALPLGARVGTSSLRRQAQLRAARPDLELIDLRGNVNTRLAKLDNGGYDAIVLACAGLQRLGLDERISARLDAPEWLPAPAQGAVAVECRGDDARIHSLLAVLDAGRTRACVEAERAMNRALHGSCHVPVAALARWEGEGLFLQGMVGSASDGRLIHADAHGSADDTEDLGRRVAQGLFDKGAAQLLAAL.

Residue C240 is modified to S-(dipyrrolylmethanemethyl)cysteine.

It belongs to the HMBS family. Monomer. Dipyrromethane is required as a cofactor.

The enzyme catalyses 4 porphobilinogen + H2O = hydroxymethylbilane + 4 NH4(+). Its pathway is porphyrin-containing compound metabolism; protoporphyrin-IX biosynthesis; coproporphyrinogen-III from 5-aminolevulinate: step 2/4. Its function is as follows. Tetrapolymerization of the monopyrrole PBG into the hydroxymethylbilane pre-uroporphyrinogen in several discrete steps. The protein is Porphobilinogen deaminase of Xanthomonas oryzae pv. oryzae (strain MAFF 311018).